We begin with the raw amino-acid sequence, 740 residues long: NAD(P)H-quinone oxidoreductase subunit 5, chloroplastic (740 aa).

The next 16 helical transmembrane spans lie at 9–29 (WIIP…LILF), 40–60 (WAFQ…YLSI), 89–109 (IDPL…MVLI), 125–145 (FAYM…SNLI), 147–167 (IYIF…FWFT), 185–205 (GDFG…SFEF), 219–239 (NEVN…GAVA), 258–278 (TPIS…FLVA), 286–306 (VIPY…LLGA), 327–347 (LGYM…FHLI), 354–374 (ALLF…VGYS), 396–416 (ITFL…CFWS), 425–445 (WLYS…TAFY), 543–563 (LFPI…GIPF), 602–622 (VLSV…YKPI), and 718–738 (YLFL…LFFL).

This sequence belongs to the complex I subunit 5 family. In terms of assembly, NDH is composed of at least 16 different subunits, 5 of which are encoded in the nucleus.

It localises to the plastid. It is found in the chloroplast thylakoid membrane. It carries out the reaction a plastoquinone + NADH + (n+1) H(+)(in) = a plastoquinol + NAD(+) + n H(+)(out). The catalysed reaction is a plastoquinone + NADPH + (n+1) H(+)(in) = a plastoquinol + NADP(+) + n H(+)(out). In terms of biological role, NDH shuttles electrons from NAD(P)H:plastoquinone, via FMN and iron-sulfur (Fe-S) centers, to quinones in the photosynthetic chain and possibly in a chloroplast respiratory chain. The immediate electron acceptor for the enzyme in this species is believed to be plastoquinone. Couples the redox reaction to proton translocation, and thus conserves the redox energy in a proton gradient. The protein is NAD(P)H-quinone oxidoreductase subunit 5, chloroplastic (ndhF) of Atropa belladonna (Belladonna).